The following is a 685-amino-acid chain: Kinesin-like protein KIP2 (685 aa).

Disordered stretches follow at residues 11-46 and 63-101; these read EHVG…GPAQ and SRPS…SGAS. The segment covering 86 to 101 has biased composition (low complexity); sequence GSPQSPDAPSSASGAS. A Kinesin motor domain is found at 113–446; the sequence is NVSVAIRIKP…VRFASRAKNI (334 aa). 185–192 lines the ATP pocket; it reads GMTGSGKT. 2 coiled-coil regions span residues 464 to 486 and 520 to 663; these read IIQN…RRSA and LEVE…SALS. The tract at residues 485 to 510 is disordered; the sequence is SAAAPSGNGSTSPLDSPGVGGTSLSE.

It belongs to the TRAFAC class myosin-kinesin ATPase superfamily. Kinesin family.

The protein resides in the cytoplasm. It localises to the cytoskeleton. Required for assembly of the mitotic spindle. The polypeptide is Kinesin-like protein KIP2 (KIP2) (Eremothecium gossypii (strain ATCC 10895 / CBS 109.51 / FGSC 9923 / NRRL Y-1056) (Yeast)).